The chain runs to 209 residues: Large ribosomal subunit protein uL3c (209 aa).

Residues 132 to 154 (PMSHGSKNHRLPGSIGAGSTPGR) are disordered.

The protein belongs to the universal ribosomal protein uL3 family. Part of the 50S ribosomal subunit.

It localises to the plastid. It is found in the cyanelle. One of the primary rRNA binding proteins, it binds directly near the 3'-end of the 23S rRNA, where it nucleates assembly of the 50S subunit. The polypeptide is Large ribosomal subunit protein uL3c (rpl3) (Cyanophora paradoxa).